A 626-amino-acid chain; its full sequence is Janus kinase and microtubule-interacting protein 1 (626 aa).

A disordered region spans residues 1–25; sequence MSKKGRSKGDKPEAETDSVQMANEE. Positions 1-365 are mediates association with microtubules; sequence MSKKGRSKGD…KLKSLTRENV (365 aa). 2 coiled-coil regions span residues 13-255 and 284-413; these read EAET…EAER and ERDV…DDLS. Positions 365 to 626 are mediates interaction with TYK2 and GABBR1; it reads VEMKEKLSAQ…ILFEPKLKFM (262 aa). Position 382 is a phosphoserine (S382). Residues 452–461 show a composition bias toward polar residues; that stretch reads ETLSETSYNT. The segment at 452–481 is disordered; sequence ETLSETSYNTDRTDRTPATPEEDLDETTTR. T470 carries the phosphothreonine modification. The stretch at 490–604 forms a coiled coil; it reads QLTREYQALQ…EFRVLELEVR (115 aa).

Belongs to the JAKMIP family. As to quaternary structure, homodimer. Interacts with JAK1 and TYK2. Forms a complex with GABBR1 and KIF5B/kinesin-1. In terms of processing, phosphorylated.

The protein resides in the cytoplasm. It is found in the cytoskeleton. Its subcellular location is the membrane. Associates with microtubules and may play a role in the microtubule-dependent transport of the GABA-B receptor. May play a role in JAK1 signaling and regulate microtubule cytoskeleton rearrangements. This chain is Janus kinase and microtubule-interacting protein 1 (Jakmip1), found in Mus musculus (Mouse).